The primary structure comprises 156 residues: Small ribosomal subunit protein uS7c (156 aa).

It belongs to the universal ribosomal protein uS7 family. In terms of assembly, part of the 30S ribosomal subunit.

The protein localises to the plastid. Its subcellular location is the chloroplast. In terms of biological role, one of the primary rRNA binding proteins, it binds directly to 16S rRNA where it nucleates assembly of the head domain of the 30S subunit. The chain is Small ribosomal subunit protein uS7c (rps7) from Mesostigma viride (Green alga).